A 280-amino-acid chain; its full sequence is Truncated lectin 2 (280 aa).

A signal peptide spans 1–26 (MSSSNFSCILSISLTFFILLLNKVNS). Positions 148 and 150 each coordinate Mn(2+). Residues D150, F152, N154, and D158 each coordinate Ca(2+). D158 lines the Mn(2+) pocket. N163 carries an N-linked (GlcNAc...) asparagine glycan. Residue H170 coordinates Mn(2+). N272 is a glycosylation site (N-linked (GlcNAc...) asparagine).

Belongs to the leguminous lectin family.

The chain is Truncated lectin 2 (LEC2) from Medicago truncatula (Barrel medic).